The sequence spans 826 residues: Lysine-specific histone demethylase 1B (826 aa).

Basic residues predominate over residues 1–11 (MAASRGRSKKR). Residues 1–46 (MAASRGRSKKRSNLELSPDNLPLRSSGRQAKKKAVEIPDEDEDGSS) form a disordered region. Phosphoserine is present on residues serine 17 and serine 26. Residues cysteine 53, cysteine 58, cysteine 65, cysteine 73, histidine 84, histidine 90, cysteine 92, cysteine 95, cysteine 142, cysteine 147, cysteine 169, and cysteine 185 each coordinate Zn(2+). A CW-type zinc finger spans residues 133-193 (DQQLPYWVQC…HCSFPEDLRV (61 aa)). Serine 253 bears the Phosphoserine mark. Residues 279 to 298 (YQPNECGKALCVRPDVMELD) are GLYR1-binding. The SWIRM domain occupies 281 to 379 (PNECGKALCV…TGVLTVAAGQ (99 aa)). 389 to 445 (KSVLVVGAGPAGLAAARQLHNFGMKVTVLEAKDRIGGRVWDDKSFKGVVVGRGPQIV) is an FAD binding site. 3 histone H3-binding regions span residues 444–473 (IVNG…RCDL), 493–504 (FNALLDVVSEWR), and 544–578 (FHLS…AGDH). The GLYR1-binding stretch occupies residues 570–572 (FFA). FAD-binding positions include valine 604, glutamate 799, and 807-809 (QTV). Residues 802 to 818 (NRHFPQTVTGAYLSGVR) are GLYR1-binding.

This sequence belongs to the flavin monoamine oxidase family. As to quaternary structure, interacts with its cofactor GLYR1 at nucleosomes; this interaction stimulates H3K4me1 and H3K4me2 demethylation. In contrast to KDM1A, does not form a complex with RCOR1/CoREST. Possible accessory component of the polycomb repressive deubiquitinase (PR-DUB) complex, at least composed of BAP1, one of ASXL1, ASXL2 or (probably) ASXL3 and one of MBD5 or MBD6. The PR-DUB core associates with a number of accessory proteins, including FOXK1, FOXK2, KDM1B, HCFC1 and OGT; KDM1B specifically associates with ASXL2 PR-DUB complexes. The cofactor is FAD. Zn(2+) is required as a cofactor. As to expression, expressed in growing oocytes and in intestinal gland.

It localises to the nucleus. The protein localises to the chromosome. The enzyme catalyses N(6),N(6)-dimethyl-L-lysyl(4)-[histone H3] + 2 A + 2 H2O = L-lysyl(4)-[histone H3] + 2 formaldehyde + 2 AH2. The catalysed reaction is N(6)-methyl-L-lysyl(4)-[histone H3] + A + H2O = L-lysyl(4)-[histone H3] + formaldehyde + AH2. Inhibited by tranylcypromine, but not by pargyline, deprenyl or rasagiline. Histone H3K4me1 and H3K4me2 demethylase activity is inhibited by DNA, this inhibition is released in complex with GLYR1. In terms of biological role, histone demethylase that demethylates 'Lys-4' of histone H3, a specific tag for epigenetic transcriptional activation, thereby acting as a corepressor. Required for de novo DNA methylation of a subset of imprinted genes during oogenesis. Acts by oxidizing the substrate by FAD to generate the corresponding imine that is subsequently hydrolyzed. Demethylates both mono- and di-methylated 'Lys-4' of histone H3. Has no effect on tri-methylated 'Lys-4', mono-, di- or tri-methylated 'Lys-9', mono-, di- or tri-methylated 'Lys-27', mono-, di- or tri-methylated 'Lys-36' of histone H3, or on mono-, di- or tri-methylated 'Lys-20' of histone H4. Histone demethylase that demethylates 'Lys-4' of histone H3, a specific tag for epigenetic transcriptional activation, thereby acting as a corepressor. Required for de novo DNA methylation of a subset of imprinted genes during oogenesis. Acts by oxidizing the substrate by FAD to generate the corresponding imine that is subsequently hydrolyzed. Demethylates both mono- and di-methylated 'Lys-4' of histone H3. Has no effect on tri-methylated 'Lys-4', mono-, di- or tri-methylated 'Lys-9', mono-, di- or tri-methylated 'Lys-27', mono-, di- or tri-methylated 'Lys-36' of histone H3, or on mono-, di- or tri-methylated 'Lys-20' of histone H4. Alone, it is unable to demethylate H3K4me on nucleosomes and requires the presence of GLYR1 to achieve such activity, they form a multifunctional enzyme complex that modifies transcribed chromatin and facilitates Pol II transcription through nucleosomes. The chain is Lysine-specific histone demethylase 1B from Mus musculus (Mouse).